We begin with the raw amino-acid sequence, 232 residues long: Aspartate/glutamate leucyltransferase (232 aa).

It belongs to the R-transferase family. Bpt subfamily.

The protein resides in the cytoplasm. The enzyme catalyses N-terminal L-glutamyl-[protein] + L-leucyl-tRNA(Leu) = N-terminal L-leucyl-L-glutamyl-[protein] + tRNA(Leu) + H(+). It carries out the reaction N-terminal L-aspartyl-[protein] + L-leucyl-tRNA(Leu) = N-terminal L-leucyl-L-aspartyl-[protein] + tRNA(Leu) + H(+). Functionally, functions in the N-end rule pathway of protein degradation where it conjugates Leu from its aminoacyl-tRNA to the N-termini of proteins containing an N-terminal aspartate or glutamate. The protein is Aspartate/glutamate leucyltransferase of Vibrio vulnificus (strain YJ016).